Reading from the N-terminus, the 301-residue chain is Small ribosomal subunit biogenesis GTPase RsgA (301 aa).

The CP-type G domain occupies 65 to 224; that stretch reads YNQLIRPKVA…LVDTPGFGNL (160 aa). GTP-binding positions include 115–118 and 167–175; these read SKYD and GNSGVGKST. Residues Cys247, Cys252, His254, and Cys260 each contribute to the Zn(2+) site.

It belongs to the TRAFAC class YlqF/YawG GTPase family. RsgA subfamily. As to quaternary structure, monomer. Associates with 30S ribosomal subunit, binds 16S rRNA. Requires Zn(2+) as cofactor.

It localises to the cytoplasm. Its function is as follows. One of several proteins that assist in the late maturation steps of the functional core of the 30S ribosomal subunit. Helps release RbfA from mature subunits. May play a role in the assembly of ribosomal proteins into the subunit. Circularly permuted GTPase that catalyzes slow GTP hydrolysis, GTPase activity is stimulated by the 30S ribosomal subunit. The chain is Small ribosomal subunit biogenesis GTPase RsgA from Ureaplasma urealyticum serovar 10 (strain ATCC 33699 / Western).